A 223-amino-acid polypeptide reads, in one-letter code: Thymidylate kinase (223 aa).

7-14 serves as a coordination point for ATP; sequence GIDGAGKS.

It belongs to the thymidylate kinase family.

It carries out the reaction dTMP + ATP = dTDP + ADP. Phosphorylation of dTMP to form dTDP in both de novo and salvage pathways of dTTP synthesis. This is Thymidylate kinase from Prosthecochloris aestuarii (strain DSM 271 / SK 413).